The following is a 236-amino-acid chain: Small ribosomal subunit protein eS6 (236 aa).

2 positions are modified to phosphoserine: Ser-232 and Ser-233.

It belongs to the eukaryotic ribosomal protein eS6 family. Post-translationally, phosphorylated.

This chain is Small ribosomal subunit protein eS6 (RPS6), found in Kluyveromyces lactis (strain ATCC 8585 / CBS 2359 / DSM 70799 / NBRC 1267 / NRRL Y-1140 / WM37) (Yeast).